We begin with the raw amino-acid sequence, 320 residues long: D-alanine--D-alanine ligase (320 aa).

Residues 104–308 (KRVCLSHGVP…YEDLCVEILR (205 aa)) form the ATP-grasp domain. 134–189 (AAEFGMPLMLKAPHEGSTIGIAKVETAEGMQAGFDLCAKYDDVVLVEQFVKGRELT) lines the ATP pocket. Mg(2+) is bound by residues Asp-261, Glu-275, and Asn-277.

The protein belongs to the D-alanine--D-alanine ligase family. Requires Mg(2+) as cofactor. It depends on Mn(2+) as a cofactor.

The protein localises to the cytoplasm. The catalysed reaction is 2 D-alanine + ATP = D-alanyl-D-alanine + ADP + phosphate + H(+). The protein operates within cell wall biogenesis; peptidoglycan biosynthesis. In terms of biological role, cell wall formation. The sequence is that of D-alanine--D-alanine ligase from Janthinobacterium sp. (strain Marseille) (Minibacterium massiliensis).